We begin with the raw amino-acid sequence, 1621 residues long: Nestin (1621 aa).

Met1 carries the N-acetylmethionine modification. Positions 1–7 (MEGCMGE) are head. The interval 8-43 (ESFQMWELNRRLEAYLARVKALEEQNELLSAELGGL) is coil 1A. Residues 8–313 (ESFQMWELNR…TLLEAENSRL (306 aa)) enclose the IF rod domain. Positions 44–55 (RAQSADTSWRAH) are linker 1. Residues 56–151 (ADDELAALRA…VAHEEERVGL (96 aa)) are coil 1B. A linker 12 region spans residues 152–173 (NAQAACAPRCPAPPRGPPAPAP). Positions 174 to 192 (EVEELARRLGEAWRGAVRG) are coil 2A. The interval 193–195 (YQE) is linker 2. The interval 196 to 313 (RVAHMETSLG…TLLEAENSRL (118 aa)) is coil 2B. Ser311 bears the Phosphoserine mark. A tail region spans residues 314-1621 (QTPGGGSKTS…DRESWSSGED (1308 aa)). Residue Thr315 is modified to Phosphothreonine. Phosphoserine is present on Ser325. Thr338 carries the post-translational modification Phosphothreonine. Phosphoserine occurs at positions 355 and 358. Thr388 is subject to Phosphothreonine. A phosphoserine mark is found at Ser398, Ser471, Ser476, Ser548, Ser564, Ser578, Ser588, Ser638, Ser680, Ser702, Ser746, and Ser768. Residues 439 to 490 (SVLPGPEEPGGQRQEASTGQSPEDHASLAPPLSPDHSSLEAKDGESGGSRVF) are disordered. Residues 670-788 (LEKENQEPLR…PPEKVDLEPL (119 aa)) are disordered. 3 stretches are compositionally biased toward basic and acidic residues: residues 687-725 (EALRPLTKENQEPLRSLEDENKEAFRSLEKENQEPLKTL), 736-770 (LETENHKSLRSLEEQDQETLRTLEKETQQRRRSLG), and 779-788 (PPEKVDLEPL). Ser790 bears the Phosphoserine mark. A Glycyl lysine isopeptide (Lys-Gly) (interchain with G-Cter in SUMO1); alternate cross-link involves residue Lys811. Residue Lys811 forms a Glycyl lysine isopeptide (Lys-Gly) (interchain with G-Cter in SUMO2); alternate linkage. A phosphoserine mark is found at Ser820, Ser831, and Ser842. Thr851 is modified (phosphothreonine). Residues Ser894, Ser905, Ser913, and Ser934 each carry the phosphoserine modification. Positions 895–1593 (LGAWNLENLR…GSALKTSWAG (699 aa)) are disordered. 4 stretches are compositionally biased toward basic and acidic residues: residues 904–936 (RSPEEVDKESQRNLEEEENLGKGEYQESLRSLE), 949–960 (QRWEDTVEKDQE), 980–994 (LNLREQDGFTGKEEV), and 1012–1024 (GHPESPEPKEQRG). Ser1016 carries the phosphoserine modification. Residues 1085 to 1098 (GSEPAMGESAAGAE) are compositionally biased toward low complexity. The span at 1099 to 1110 (PGPGQGVGGLGD) shows a compositional bias: gly residues. Composition is skewed to basic and acidic residues over residues 1129-1145 (LEAKRVQGLEGPRKDLE) and 1159-1184 (GKSRDPWEPPREGREESEAEAPRGAE). Ser1261, Ser1282, Ser1286, Ser1310, Ser1347, Ser1409, Ser1418, and Ser1452 each carry phosphoserine. Residues 1275 to 1292 (PQEEGEESREESEEDELG) are compositionally biased toward acidic residues. A compositionally biased stretch (acidic residues) spans 1409-1428 (SDGFADEEESGEEGEEDQEE). Composition is skewed to low complexity over residues 1440-1453 (GSSVGSLQALSSSQ) and 1460-1470 (SDSVSVSVPWD). The segment covering 1486–1495 (ETESQDSAEP) has biased composition (polar residues). Phosphoserine is present on residues Ser1496, Ser1498, Ser1577, Ser1617, and Ser1618.

Belongs to the intermediate filament family. As to quaternary structure, forms homodimers and homotetramers in vitro. In mixtures with other intermediate filament proteins such as vimentin and alpha-internexin, tis protein preferentially forms heterodimers which can assemble to form intermediate filaments if nestin does not exceed 25%. Interacts with FHOD3. In terms of processing, constitutively phosphorylated. This increases during mitosis when the cytoplasmic intermediate filament network is reorganized. As to expression, CNS stem cells.

Required for brain and eye development. Promotes the disassembly of phosphorylated vimentin intermediate filaments (IF) during mitosis and may play a role in the trafficking and distribution of IF proteins and other cellular factors to daughter cells during progenitor cell division. Required for survival, renewal and mitogen-stimulated proliferation of neural progenitor cells. The sequence is that of Nestin (NES) from Homo sapiens (Human).